Here is a 561-residue protein sequence, read N- to C-terminus: Urocanate hydratase (561 aa).

Residues 52–53 (GG), Gln130, 176–178 (GMG), Glu196, Arg201, 242–243 (NA), 263–267 (QTSAH), 273–274 (YL), and Tyr322 each bind NAD(+). The active site involves Cys410. Residue Gly492 participates in NAD(+) binding.

It belongs to the urocanase family. The cofactor is NAD(+).

Its subcellular location is the cytoplasm. It catalyses the reaction 4-imidazolone-5-propanoate = trans-urocanate + H2O. It participates in amino-acid degradation; L-histidine degradation into L-glutamate; N-formimidoyl-L-glutamate from L-histidine: step 2/3. Functionally, catalyzes the conversion of urocanate to 4-imidazolone-5-propionate. This is Urocanate hydratase from Salmonella newport (strain SL254).